Here is a 334-residue protein sequence, read N- to C-terminus: TPR repeat-containing protein YsoA (334 aa).

3 TPR repeats span residues 17–50 (KDRL…DDTE), 52–84 (DLHL…GYGH), and 195–230 (HPII…EPSE).

The sequence is that of TPR repeat-containing protein YsoA (ysoA) from Bacillus subtilis (strain 168).